The sequence spans 1241 residues: Sterol 3-beta-glucosyltransferase (1241 aa).

Over residues 1–11 (MSGIESTEEPC) the composition is skewed to acidic residues. Disordered regions lie at residues 1–97 (MSGI…KPSI) and 124–189 (DQQV…TLRK). The segment covering 25 to 34 (PEERQTRKDS) has biased composition (basic and acidic residues). The segment covering 136–155 (ESEDQQADESSDEQEDDDQD) has biased composition (acidic residues). Residues 220–267 (NKLKRTFDISDTDVFISDYPCWLMGDVLLQGHLYITKHHILFFAFLPK) form the GRAM 1 domain. The PH domain maps to 271 to 373 (SISKSGALTT…WVSSLKKHIF (103 aa)). Positions 499–556 (DDFSQEQESAESSKPVSDDEIVSADDNQELEEKQPQDNLANAEKENHDKVSRANSRRT) are disordered. A compositionally biased stretch (acidic residues) spans 516 to 527 (DDEIVSADDNQE). The segment covering 540-549 (AEKENHDKVS) has biased composition (basic and acidic residues). A GRAM 2 domain is found at 609–675 (ERFRKHFSLT…SDIENVNKEK (67 aa)). The tract at residues 720–741 (KGSTDSSPPNASEGSSDESCNL) is disordered. Positions 723 to 741 (TDSSPPNASEGSSDESCNL) are enriched in polar residues. UDP-alpha-D-glucose is bound by residues serine 797, arginine 798, aspartate 800, asparagine 1071, valine 1098, histidine 1100, histidine 1113, serine 1116, glycine 1117, threonine 1118, aspartate 1137, and glutamine 1138.

This sequence belongs to the glycosyltransferase 28 family.

The protein resides in the cytoplasm. The protein localises to the preautophagosomal structure membrane. It catalyses the reaction a sterol + UDP-alpha-D-glucose = a sterol 3-beta-D-glucoside + UDP + H(+). The catalysed reaction is ergosterol + UDP-alpha-D-glucose = ergosteryl 3-beta-D-glucoside + UDP + H(+). Sterol glycosyltransferase responsible for the glycosylation of ergosterol to form ergosterol-glucoside. Mediates autophagic degradation of peroxisomes (pexophagy). This Pichia angusta (Yeast) protein is Sterol 3-beta-glucosyltransferase.